Here is a 198-residue protein sequence, read N- to C-terminus: ATP-dependent Clp protease proteolytic subunit (198 aa).

S98 (nucleophile) is an active-site residue. The active site involves H123.

The protein belongs to the peptidase S14 family. As to quaternary structure, fourteen ClpP subunits assemble into 2 heptameric rings which stack back to back to give a disk-like structure with a central cavity, resembling the structure of eukaryotic proteasomes.

The protein localises to the cytoplasm. The enzyme catalyses Hydrolysis of proteins to small peptides in the presence of ATP and magnesium. alpha-casein is the usual test substrate. In the absence of ATP, only oligopeptides shorter than five residues are hydrolyzed (such as succinyl-Leu-Tyr-|-NHMec, and Leu-Tyr-Leu-|-Tyr-Trp, in which cleavage of the -Tyr-|-Leu- and -Tyr-|-Trp bonds also occurs).. Functionally, cleaves peptides in various proteins in a process that requires ATP hydrolysis. Has a chymotrypsin-like activity. Plays a major role in the degradation of misfolded proteins. The chain is ATP-dependent Clp protease proteolytic subunit from Listeria innocua serovar 6a (strain ATCC BAA-680 / CLIP 11262).